The chain runs to 452 residues: Maltoporin (452 aa).

Positions 1–25 are cleaved as a signal peptide; sequence MMITLRKLPLAVAVAAGVMSAQAMA.

It belongs to the porin LamB (TC 1.B.3) family. Homotrimer formed of three 18-stranded antiparallel beta-barrels, containing three independent channels.

The protein localises to the cell outer membrane. The enzyme catalyses beta-maltose(in) = beta-maltose(out). In terms of biological role, involved in the transport of maltose and maltodextrins. This is Maltoporin from Salmonella paratyphi A (strain ATCC 9150 / SARB42).